The primary structure comprises 350 residues: Putative aminopeptidase MJ0555 (350 aa).

2 residues coordinate a divalent metal cation: His-62 and Asp-175. Glu-207 serves as the catalytic Proton acceptor. 3 residues coordinate a divalent metal cation: Glu-208, Asp-230, and His-321.

The protein belongs to the peptidase M42 family. A divalent metal cation serves as cofactor.

The polypeptide is Putative aminopeptidase MJ0555 (Methanocaldococcus jannaschii (strain ATCC 43067 / DSM 2661 / JAL-1 / JCM 10045 / NBRC 100440) (Methanococcus jannaschii)).